We begin with the raw amino-acid sequence, 338 residues long: Protein FosB (338 aa).

2 disordered regions span residues Met1–Phe54 and Ala80–Leu179. Composition is skewed to polar residues over residues Ser13–Ser31 and Thr102–Tyr112. At Ser27 the chain carries Phosphoserine. A compositionally biased stretch (low complexity) spans Pro123–Pro137. The 64-residue stretch at Glu155–His218 folds into the bZIP domain. The tract at residues Lys157 to Arg182 is basic motif. The leucine-zipper stretch occupies residues Leu183–Leu211. Disordered regions lie at residues Cys222–Leu276 and Gly316–Leu338. Residues Leu256 to Pro265 are compositionally biased toward pro residues. 2 stretches are compositionally biased toward polar residues: residues Phe266–Leu276 and Gln318–Leu338.

It belongs to the bZIP family. Fos subfamily. As to quaternary structure, heterodimer; binds to DNA as heterodimer. Component of an AP-1 transcription factor complex; composed of FOS-JUN heterodimers. As part of the AP-1 transcription factor complex, forms heterodimers with JUN, JUNB or JUND, thereby binding to the AP-1 consensus sequence and stimulating transcription. Interacts with the BAF multiprotein chromatin-remodeling complex subunits SMARCB1 and SMARCD1. Interacts with ARID1A and JUN. Homodimer under oxidizing conditions and monomer under reducing conditions (in vitro). Heterodimer; binds to DNA as heterodimer. Forms heterodimers with JUNB, JUN or JUND; thereby binding to the AP-1 consensus sequence but does not stimulate transcription. Forms heterodimers with JUND under oxidizing conditions. In terms of processing, phosphorylated. Post-translationally, phosphorylated at Ser-27 by CSNK2A1; phosphorylation increases protein stability and transactivation potential. In terms of tissue distribution, expressed in brain, including the preoptic area of the hypothalamus, the main and accessory olfactory bulbs, the pyriform cortex and the hippocampus (at protein level). Expressed in the neurons of the subgranular zone of the dentate gyrus in the hippocampus (at protein level). Expressed in pyramidal cells in CA1 and CA3, in the dentate gyrus and the nucleus accumbens of the striatum (at protein level). Expressed in the core and shell of the nucleus accumbens of the striatum (at protein level). Expressed in the neurons of the subgranular zone of the dentate gyrus in the hippocampus (at protein level).

The protein localises to the nucleus. Functionally, heterodimerizes with proteins of the JUN family to form an AP-1 transcription factor complex, thereby enhancing their DNA binding activity to gene promoters containing an AP-1 consensus sequence 5'-TGA[GC]TCA-3' and enhancing their transcriptional activity. As part of the AP-1 complex, facilitates enhancer selection together with cell-type-specific transcription factors by collaboratively binding to nucleosomal enhancers and recruiting the SWI/SNF (BAF) chromatin remodeling complex to establish accessible chromatin. Together with JUN, plays a role in activation-induced cell death of T cells by binding to the AP-1 promoter site of FASLG/CD95L, and inducing its transcription in response to activation of the TCR/CD3 signaling pathway. Exhibits transactivation activity in vitro. Involved in the display of nurturing behavior towards newborns. May play a role in neurogenesis in the hippocampus and in learning and memory-related tasks by regulating the expression of various genes involved in neurogenesis, depression and epilepsy. Implicated in behavioral responses related to morphine reward and spatial memory. Exhibits lower transactivation activity than isoform 1 in vitro. The heterodimer with JUN does not display any transcriptional activity, and may thereby act as an transcriptional inhibitor. May be involved in the regulation of neurogenesis in the hippocampus. May play a role in synaptic modifications in nucleus accumbens medium spiny neurons and thereby play a role in adaptive and pathological reward-dependent learning, including maladaptive responses involved in drug addiction. Seems to be more stably expressed with a half-life of ~9.5 hours in cell culture as compared to 1.5 hours half-life of isoform 1. This Mus musculus (Mouse) protein is Protein FosB.